The following is a 156-amino-acid chain: Small ribosomal subunit protein uS7 (156 aa).

The protein belongs to the universal ribosomal protein uS7 family. In terms of assembly, part of the 30S ribosomal subunit. Contacts proteins S9 and S11.

One of the primary rRNA binding proteins, it binds directly to 16S rRNA where it nucleates assembly of the head domain of the 30S subunit. Is located at the subunit interface close to the decoding center, probably blocks exit of the E-site tRNA. The polypeptide is Small ribosomal subunit protein uS7 (Acaryochloris marina (strain MBIC 11017)).